The primary structure comprises 82 residues: Small ribosomal subunit protein bS16 (82 aa).

It belongs to the bacterial ribosomal protein bS16 family.

The protein is Small ribosomal subunit protein bS16 of Psychromonas ingrahamii (strain DSM 17664 / CCUG 51855 / 37).